Here is a 143-residue protein sequence, read N- to C-terminus: Transcriptional regulator MraZ (143 aa).

SpoVT-AbrB domains lie at 5 to 47 and 76 to 119; these read TYAP…SQRE and ASAE…DAEA.

Belongs to the MraZ family. As to quaternary structure, forms oligomers.

It is found in the cytoplasm. Its subcellular location is the nucleoid. The protein is Transcriptional regulator MraZ of Leifsonia xyli subsp. xyli (strain CTCB07).